Consider the following 173-residue polypeptide: Photosystem I assembly protein Ycf3 (173 aa).

TPR repeat units lie at residues A35 to P68, S72 to L105, and G120 to N153.

The protein belongs to the Ycf3 family.

The protein localises to the plastid. The protein resides in the chloroplast thylakoid membrane. Essential for the assembly of the photosystem I (PSI) complex. May act as a chaperone-like factor to guide the assembly of the PSI subunits. The protein is Photosystem I assembly protein Ycf3 of Cyanidium caldarium (Red alga).